A 279-amino-acid chain; its full sequence is Odontogenic ameloblast-associated protein (279 aa).

The N-terminal stretch at 1–15 (MKIIILLGFLGATLS) is a signal peptide. O-linked (GalNAc...) threonine glycosylation is found at Thr115 and Thr119. Residues 127–129 (MPY) are interaction with ARHGEF5. The segment covering 243–263 (STSPKPSTTNVFTSAVDQTIT) has biased composition (polar residues). The interval 243–279 (STSPKPSTTNVFTSAVDQTITPELPEEKDKTDSLREP) is disordered. Thr244 is a glycosylation site (O-linked (GalNAc...) threonine). The O-linked (GalNAc...) serine glycan is linked to Ser249. 3 O-linked (GalNAc...) threonine glycosylation sites follow: Thr250, Thr251, and Thr255. Ser256 carries an O-linked (GalNAc...) serine glycan. Thr261, Thr263, and Thr273 each carry an O-linked (GalNAc...) threonine glycan. The segment covering 267-279 (PEEKDKTDSLREP) has biased composition (basic and acidic residues). O-linked (GalNAc...) serine glycosylation is present at Ser275.

The protein belongs to the ODAM family. Interacts (via C-terminus) with ARHGEF5. In terms of processing, O-glycosylated. In terms of tissue distribution, expressed in the junctional epithelium of healthy teeth. In periodontitis, absent in the pocket epithelium of the diseased periodontium but is detected in the gingival crevicular fluid.

It localises to the secreted. The protein resides in the cytoplasm. Its subcellular location is the nucleus. In terms of biological role, tooth-associated epithelia protein that probably plays a role in odontogenesis, the complex process that results in the initiation and generation of the tooth. May be incorporated in the enamel matrix at the end of mineralization process. Involved in the induction of RHOA activity via interaction with ARHGEF and expression of downstream factors such as ROCK. Plays a role in attachment of the junctional epithelium to the tooth surface. The polypeptide is Odontogenic ameloblast-associated protein (ODAM) (Homo sapiens (Human)).